The following is a 187-amino-acid chain: Ribosome maturation factor RimM (187 aa).

Residues 1–17 (MTSTPSPSTADPNSTND) show a composition bias toward polar residues. The disordered stretch occupies residues 1 to 21 (MTSTPSPSTADPNSTNDWLPV). In terms of domain architecture, PRC barrel spans 111-184 (EGEFHLLDLV…WLLLTPPPGL (74 aa)).

This sequence belongs to the RimM family. Binds ribosomal protein uS19.

The protein localises to the cytoplasm. Its function is as follows. An accessory protein needed during the final step in the assembly of 30S ribosomal subunit, possibly for assembly of the head region. Essential for efficient processing of 16S rRNA. May be needed both before and after RbfA during the maturation of 16S rRNA. It has affinity for free ribosomal 30S subunits but not for 70S ribosomes. The polypeptide is Ribosome maturation factor RimM (Synechococcus sp. (strain CC9311)).